A 263-amino-acid chain; its full sequence is uncharacterized protein (263 aa).

31–38 provides a ligand contact to ATP; that stretch reads GPTGSGKT.

It belongs to the CbbQ/NirQ/NorQ/GpvN family.

This is an uncharacterized protein from Staphylococcus haemolyticus (strain JCSC1435).